The chain runs to 713 residues: DNA polymerase eta (713 aa).

The UmuC domain maps to Val-9 to Gly-259. Asp-13 and Met-14 together coordinate Mg(2+). Asp-13 and Met-14 together coordinate Mn(2+). An a 2'-deoxyribonucleoside 5'-triphosphate-binding site is contributed by Arg-61. Residues Asp-115 and Glu-116 each contribute to the Mg(2+) site. Positions 115 and 116 each coordinate Mn(2+). Disordered stretches follow at residues Thr-441–Ala-472 and Glu-495–Gly-527. Polar residues-rich tracts occupy residues Val-456–Ser-466 and Ser-497–Gly-527. Residues Ala-628–Ser-662 form a UBZ3-type zinc finger. Zn(2+)-binding residues include Cys-635, Cys-638, His-650, and His-654. The disordered stretch occupies residues Val-677–Glu-705. Glycyl lysine isopeptide (Lys-Gly) (interchain with G-Cter in ubiquitin) cross-links involve residues Lys-682, Lys-686, and Lys-694. Residues Met-701–Phe-708 carry the PIP-box motif. Lys-709 participates in a covalent cross-link: Glycyl lysine isopeptide (Lys-Gly) (interchain with G-Cter in ubiquitin).

This sequence belongs to the DNA polymerase type-Y family. Interacts with REV1. Interacts with monoubiquitinated PCNA, but not unmodified PCNA. Interacts with POLI; this interaction targets POLI to the replication machinery. Interacts with PALB2 and BRCA2; the interactions are direct and are required to sustain the recruitment of POLH at blocked replication forks and to stimulate POLH-dependent DNA synthesis on D loop substrates. Interacts (via C-terminus) with TRAIP. Interacts with ubiquitin. Interacts with POLDIP2. Mg(2+) is required as a cofactor. Mn(2+) serves as cofactor. Post-translationally, monoubiquitinated by RCHY1/PIRH2. Ubiquitination depends on integrity of the UBZ3-type zinc finger domain and is enhanced by TRAIP. Ubiquitination inhibits the ability of PolH to interact with PCNA and to bypass UV-induced lesions.

It localises to the nucleus. The enzyme catalyses DNA(n) + a 2'-deoxyribonucleoside 5'-triphosphate = DNA(n+1) + diphosphate. With respect to regulation, the enzyme in complex with the DNA substrate binds a third divalent metal cation. The binding of this third divalent cation, which is coordinated by water molecules and two oxygen atoms from DNA and dNTP, is essential for catalyzing the DNA synthesis. In terms of biological role, DNA polymerase specifically involved in the DNA repair by translesion synthesis (TLS). Due to low processivity on both damaged and normal DNA, cooperates with the heterotetrameric (REV3L, REV7, POLD2 and POLD3) POLZ complex for complete bypass of DNA lesions. Inserts one or 2 nucleotide(s) opposite the lesion, the primer is further extended by the tetrameric POLZ complex. In the case of 1,2-intrastrand d(GpG)-cisplatin cross-link, inserts dCTP opposite the 3' guanine. Particularly important for the repair of UV-induced pyrimidine dimers. Although inserts the correct base, may cause base transitions and transversions depending upon the context. May play a role in hypermutation at immunoglobulin genes. Forms a Schiff base with 5'-deoxyribose phosphate at abasic sites, but does not have any lyase activity, preventing the release of the 5'-deoxyribose phosphate (5'-dRP) residue. This covalent trapping of the enzyme by the 5'-dRP residue inhibits its DNA synthetic activity during base excision repair, thereby avoiding high incidence of mutagenesis. Targets POLI to replication foci. This is DNA polymerase eta (POLH) from Homo sapiens (Human).